The chain runs to 923 residues: Protein translocase subunit SecA (923 aa).

Residues glutamine 86, 104–108, and aspartate 512 contribute to the ATP site; that span reads GEGKT. Positions 906, 908, 917, and 918 each coordinate Zn(2+).

The protein belongs to the SecA family. As to quaternary structure, monomer and homodimer. Part of the essential Sec protein translocation apparatus which comprises SecA, SecYEG and auxiliary proteins SecDF-YajC and YidC. Zn(2+) is required as a cofactor.

It localises to the cell inner membrane. The protein localises to the cytoplasm. The enzyme catalyses ATP + H2O + cellular proteinSide 1 = ADP + phosphate + cellular proteinSide 2.. In terms of biological role, part of the Sec protein translocase complex. Interacts with the SecYEG preprotein conducting channel. Has a central role in coupling the hydrolysis of ATP to the transfer of proteins into and across the cell membrane, serving both as a receptor for the preprotein-SecB complex and as an ATP-driven molecular motor driving the stepwise translocation of polypeptide chains across the membrane. In Caulobacter vibrioides (strain ATCC 19089 / CIP 103742 / CB 15) (Caulobacter crescentus), this protein is Protein translocase subunit SecA.